A 1893-amino-acid polypeptide reads, in one-letter code: Plexin-A4 (1893 aa).

The N-terminal stretch at 1–23 (MKAMPWNWTCLLSHLLVVGMGSS) is a signal peptide. In terms of domain architecture, Sema spans 24–506 (TLLPRQPPQL…SERQLTRVPV (483 aa)). Residues 24 to 1236 (TLLPRQPPQL…IAPDSPLSLP (1213 aa)) are Extracellular-facing. 10 disulfides stabilise this stretch: cysteine 94/cysteine 103, cysteine 129/cysteine 137, cysteine 283/cysteine 404, cysteine 299/cysteine 355, cysteine 373/cysteine 392, cysteine 509/cysteine 526, cysteine 515/cysteine 557, cysteine 518/cysteine 535, cysteine 529/cysteine 541, and cysteine 592/cysteine 611. Positions 508–558 (SCGQYRSCGECLGSGDPHCGWCVLHNTCTRKERCERSREPRRFASEMKQCV) constitute a PSI 1 domain. Asparagine 654 carries an N-linked (GlcNAc...) asparagine glycan. PSI domains are found at residues 654-701 (NCSV…EDCP) and 802-855 (KCGA…SKCT). 4 consecutive IPT/TIG domains span residues 857–951 (PRIT…YYFM), 953–1036 (LTLA…FQYV), 1039–1138 (PTIV…FTYY), and 1141–1229 (PVFE…YIAP). 3 N-linked (GlcNAc...) asparagine glycosylation sites follow: asparagine 1006, asparagine 1131, and asparagine 1179. A helical transmembrane segment spans residues 1237 to 1257 (AIVSIAVAGGLLIIFIVAVLI). Residues 1258-1893 (AYKRKSRESD…QVITLMSLDS (636 aa)) are Cytoplasmic-facing. N6-acetyllysine is present on lysine 1349.

The protein belongs to the plexin family. In terms of assembly, interacts with NRP1 and NRP2. As to expression, expressed in the developing nervous system. Widely expressed in both the central and peripheral nervous systems. Expressed in the peripheral ganglia, somatosensory, olfactory, visual, auditory and equilibrium systems.

It localises to the cell membrane. In terms of biological role, coreceptor for SEMA3A. Necessary for signaling by class 3 semaphorins and subsequent remodeling of the cytoskeleton. Plays a role in axon guidance in the developing nervous system. Class 3 semaphorins bind to a complex composed of a neuropilin and a plexin. The plexin modulates the affinity of the complex for specific semaphorins, and its cytoplasmic domain is required for the activation of down-stream signaling events in the cytoplasm. In Mus musculus (Mouse), this protein is Plexin-A4 (Plxna4).